A 333-amino-acid chain; its full sequence is Outer membrane protein assembly factor BamC (333 aa).

Residues Met1–Gly18 form the signal peptide. The N-palmitoyl cysteine moiety is linked to residue Cys19. Cys19 is lipidated: S-diacylglycerol cysteine.

It belongs to the BamC family. Part of the Bam complex.

It is found in the cell outer membrane. Part of the outer membrane protein assembly complex, which is involved in assembly and insertion of beta-barrel proteins into the outer membrane. The chain is Outer membrane protein assembly factor BamC from Actinobacillus succinogenes (strain ATCC 55618 / DSM 22257 / CCUG 43843 / 130Z).